A 141-amino-acid chain; its full sequence is Putative nickel-responsive regulator (141 aa).

Positions 80, 91, 93, and 99 each coordinate Ni(2+).

The protein belongs to the transcriptional regulatory CopG/NikR family. It depends on Ni(2+) as a cofactor.

Functionally, transcriptional regulator. The protein is Putative nickel-responsive regulator of Methanococcus maripaludis (strain C7 / ATCC BAA-1331).